Consider the following 151-residue polypeptide: Deoxyuridine 5'-triphosphate nucleotidohydrolase (151 aa).

Substrate is bound by residues 70-72 (RSG), N83, 87-89 (LID), and M97.

The protein belongs to the dUTPase family. It depends on Mg(2+) as a cofactor.

The catalysed reaction is dUTP + H2O = dUMP + diphosphate + H(+). It functions in the pathway pyrimidine metabolism; dUMP biosynthesis; dUMP from dCTP (dUTP route): step 2/2. This enzyme is involved in nucleotide metabolism: it produces dUMP, the immediate precursor of thymidine nucleotides and it decreases the intracellular concentration of dUTP so that uracil cannot be incorporated into DNA. The polypeptide is Deoxyuridine 5'-triphosphate nucleotidohydrolase (Sodalis glossinidius (strain morsitans)).